The chain runs to 303 residues: Glutathione transport system permease protein GsiD (303 aa).

6 consecutive transmembrane segments (helical) span residues 40 to 60, 105 to 125, 144 to 164, 165 to 185, 222 to 242, and 266 to 286; these read AMTAALFVILLIVVAIFARWI, LAAGVFAVFIGAAIGTLLGLL, LFAFPGILLAIAVVAVLGSGI, ANVIIAVAIFSIPAFARLVRG, IVVFFTMRIGTSIISAASLSF, and VIAPHVAVFPVLAIFLTVLAF. The region spanning 101–290 is the ABC transmembrane type-1 domain; the sequence is AQISLAAGVF…LTVLAFNLLG (190 aa).

Belongs to the binding-protein-dependent transport system permease family. In terms of assembly, the complex is composed of two ATP-binding proteins (GsiA), two transmembrane proteins (GsiC and GsiD) and a solute-binding protein (GsiB).

The protein resides in the cell inner membrane. Functionally, part of the ABC transporter complex GsiABCD involved in glutathione import. Probably responsible for the translocation of the substrate across the membrane. This Shigella dysenteriae serotype 1 (strain Sd197) protein is Glutathione transport system permease protein GsiD.